The following is a 243-amino-acid chain: uncharacterized protein (243 aa).

The tract at residues 71–120 is disordered; that stretch reads KRTNVSQRNRKKGIKNNRPHKDINSSPDWGNAHRGTDWQSEKANGMNRAK. Over residues 78 to 88 the composition is skewed to basic residues; that stretch reads RNRKKGIKNNR. At serine 96 the chain carries Phosphoserine.

This is an uncharacterized protein from Saccharomyces cerevisiae (strain ATCC 204508 / S288c) (Baker's yeast).